The sequence spans 357 residues: Aminomethyltransferase (357 aa).

It belongs to the GcvT family. As to quaternary structure, the glycine cleavage system is composed of four proteins: P, T, L and H.

It catalyses the reaction N(6)-[(R)-S(8)-aminomethyldihydrolipoyl]-L-lysyl-[protein] + (6S)-5,6,7,8-tetrahydrofolate = N(6)-[(R)-dihydrolipoyl]-L-lysyl-[protein] + (6R)-5,10-methylene-5,6,7,8-tetrahydrofolate + NH4(+). In terms of biological role, the glycine cleavage system catalyzes the degradation of glycine. This Halothermothrix orenii (strain H 168 / OCM 544 / DSM 9562) protein is Aminomethyltransferase.